We begin with the raw amino-acid sequence, 342 residues long: S-adenosylmethionine:tRNA ribosyltransferase-isomerase (342 aa).

The protein belongs to the QueA family. Monomer.

Its subcellular location is the cytoplasm. It carries out the reaction 7-aminomethyl-7-carbaguanosine(34) in tRNA + S-adenosyl-L-methionine = epoxyqueuosine(34) in tRNA + adenine + L-methionine + 2 H(+). It participates in tRNA modification; tRNA-queuosine biosynthesis. Its function is as follows. Transfers and isomerizes the ribose moiety from AdoMet to the 7-aminomethyl group of 7-deazaguanine (preQ1-tRNA) to give epoxyqueuosine (oQ-tRNA). This Streptococcus pneumoniae (strain Hungary19A-6) protein is S-adenosylmethionine:tRNA ribosyltransferase-isomerase.